A 155-amino-acid chain; its full sequence is Ribosome maturation factor RimP (155 aa).

It belongs to the RimP family.

It is found in the cytoplasm. Functionally, required for maturation of 30S ribosomal subunits. The chain is Ribosome maturation factor RimP from Staphylococcus carnosus (strain TM300).